A 278-amino-acid polypeptide reads, in one-letter code: Trans-2,3-dihydro-3-hydroxyanthranilate isomerase (278 aa).

Residue E45 is part of the active site.

It belongs to the PhzF family.

The enzyme catalyses (5S,6S)-6-amino-5-hydroxycyclohexa-1,3-diene-1-carboxyate = (1R,6S)-6-amino-5-oxocyclohex-2-ene-1-carboxylate. It participates in secondary metabolite biosynthesis; pyocyanine biosynthesis. Functionally, isomerase that catalyzes the condensation of two molecules of trans-2,3-dihydro-3-hydroxyanthranilic acid (DHHA) into the phenazine ring system. The final product is not yet known. The protein is Trans-2,3-dihydro-3-hydroxyanthranilate isomerase (phzF1) of Pseudomonas aeruginosa (strain ATCC 15692 / DSM 22644 / CIP 104116 / JCM 14847 / LMG 12228 / 1C / PRS 101 / PAO1).